The following is a 471-amino-acid chain: Tetratricopeptide repeat protein 29 (471 aa).

7 TPR repeats span residues 92–131, 136–173, 182–215, 234–267, 274–307, 314–347, and 354–387; these read DKLP…EAAE, YEEV…AQLI, AEAE…THGR, VRTY…AREG, GEAS…STSL, GRAY…ARNN, and IRAC…AMEL. Residues 449-471 are disordered; it reads ATEDNIYQLPDAEEETRRSPENQ.

Expressed in spermatozoa (at protein level).

The protein resides in the cytoplasm. The protein localises to the cytoskeleton. Its subcellular location is the flagellum axoneme. Its function is as follows. Axonemal protein which is implicated in axonemal and/or peri-axonemal structure assembly and regulates flagellum assembly and beating and therefore sperm motility. This chain is Tetratricopeptide repeat protein 29 (Ttc29), found in Mus musculus (Mouse).